The following is a 200-amino-acid chain: Riboflavin synthase (200 aa).

2 Lumazine-binding repeats span residues 1–97 and 98–190; these read MFSG…IGGH and LLSG…VDTV. Residues 4–6, 48–50, 62–67, 101–103, Lys132, 141–143, and 155–160 contribute to the 2,4-dihydroxypteridine site; these read GII, CLT, DVIPET, GHV, SLT, and GLIPET.

As to quaternary structure, homotrimer.

The catalysed reaction is 2 6,7-dimethyl-8-(1-D-ribityl)lumazine + H(+) = 5-amino-6-(D-ribitylamino)uracil + riboflavin. It participates in cofactor biosynthesis; riboflavin biosynthesis; riboflavin from 2-hydroxy-3-oxobutyl phosphate and 5-amino-6-(D-ribitylamino)uracil: step 2/2. Catalyzes the dismutation of two molecules of 6,7-dimethyl-8-ribityllumazine, resulting in the formation of riboflavin and 5-amino-6-(D-ribitylamino)uracil. The chain is Riboflavin synthase (ribE) from Chlamydia pneumoniae (Chlamydophila pneumoniae).